The primary structure comprises 405 residues: Tryptophan synthase beta chain (405 aa).

Position 98 is an N6-(pyridoxal phosphate)lysine (lysine 98).

This sequence belongs to the TrpB family. Tetramer of two alpha and two beta chains. It depends on pyridoxal 5'-phosphate as a cofactor.

It carries out the reaction (1S,2R)-1-C-(indol-3-yl)glycerol 3-phosphate + L-serine = D-glyceraldehyde 3-phosphate + L-tryptophan + H2O. It functions in the pathway amino-acid biosynthesis; L-tryptophan biosynthesis; L-tryptophan from chorismate: step 5/5. Its function is as follows. The beta subunit is responsible for the synthesis of L-tryptophan from indole and L-serine. This chain is Tryptophan synthase beta chain, found in Xanthomonas euvesicatoria pv. vesicatoria (strain 85-10) (Xanthomonas campestris pv. vesicatoria).